The following is a 358-amino-acid chain: Photosystem II protein D1 2 (358 aa).

Transmembrane regions (helical) follow at residues 28 to 45 (YVGW…AATI), 117 to 132 (HFLI…QWEL), and 141 to 155 (WICV…AAMA). Position 117 (His-117) interacts with chlorophyll a. Tyr-125 is a binding site for pheophytin a. 2 residues coordinate [CaMn4O5] cluster: Asp-169 and Glu-188. Residues 196–217 (FHMLGVAGVFGGSLFSAMHGSL) traverse the membrane as a helical segment. Residue His-197 participates in chlorophyll a binding. A quinone contacts are provided by residues His-214 and 263–264 (SF). Position 214 (His-214) interacts with Fe cation. His-271 lines the Fe cation pocket. A helical transmembrane segment spans residues 273–287 (FLGAWPVVGIWFTSM). Residues His-331, Glu-332, Asp-341, and Ala-343 each contribute to the [CaMn4O5] cluster site. Residues 344–358 (TVESTPVALQAPAIG) constitute a propeptide that is removed on maturation.

The protein belongs to the reaction center PufL/M/PsbA/D family. PSII is composed of 1 copy each of membrane proteins PsbA, PsbB, PsbC, PsbD, PsbE, PsbF, PsbH, PsbI, PsbJ, PsbK, PsbL, PsbM, PsbT, PsbX, PsbY, PsbZ, Psb30/Ycf12, peripheral proteins PsbO, CyanoQ (PsbQ), PsbU, PsbV and a large number of cofactors. It forms dimeric complexes. The D1/D2 heterodimer binds P680, chlorophylls that are the primary electron donor of PSII, and subsequent electron acceptors. It shares a non-heme iron and each subunit binds pheophytin, quinone, additional chlorophylls, carotenoids and lipids. D1 provides most of the ligands for the Mn4-Ca-O5 cluster of the oxygen-evolving complex (OEC). There is also a Cl(-1) ion associated with D1 and D2, which is required for oxygen evolution. The PSII complex binds additional chlorophylls, carotenoids and specific lipids. is required as a cofactor. Tyr-160 forms a radical intermediate that is referred to as redox-active TyrZ, YZ or Y-Z. Post-translationally, C-terminally processed by CtpA; processing is essential to allow assembly of the oxygen-evolving complex and thus photosynthetic growth.

It is found in the cellular thylakoid membrane. It carries out the reaction 2 a plastoquinone + 4 hnu + 2 H2O = 2 a plastoquinol + O2. Functionally, photosystem II (PSII) is a light-driven water:plastoquinone oxidoreductase that uses light energy to abstract electrons from H(2)O, generating O(2) and a proton gradient subsequently used for ATP formation. It consists of a core antenna complex that captures photons, and an electron transfer chain that converts photonic excitation into a charge separation. The D1/D2 (PsbA/PsbD) reaction center heterodimer binds P680, the primary electron donor of PSII as well as several subsequent electron acceptors. The sequence is that of Photosystem II protein D1 2 from Parasynechococcus marenigrum (strain WH8102).